Here is a 545-residue protein sequence, read N- to C-terminus: Myotubularin-related protein 9 (545 aa).

The residue at position 1 (Met1) is an N-acetylmethionine. In terms of domain architecture, GRAM spans 4-99 (AELIKTPRVD…LNIASSIEAL (96 aa)). The 376-residue stretch at 123–498 (GWHSFLPEQE…QSLQLWEGIF (376 aa)) folds into the Myotubularin phosphatase domain. Residues 508-542 (LDEAYEEMVNIIEYNKELQAKVNVLRRQLAELETE) adopt a coiled-coil conformation.

Belongs to the protein-tyrosine phosphatase family. Non-receptor class myotubularin subfamily. Homodimer. Heterodimer (via C-terminus) with lipid phosphatase MTMR6 (via C-terminus). Heterodimer (via coiled coil domain) with lipid phosphatase MTMR7 (via C-terminus).

It is found in the cytoplasm. It localises to the cell projection. The protein resides in the ruffle membrane. Its subcellular location is the perinuclear region. The protein localises to the endoplasmic reticulum. Its function is as follows. Acts as an adapter for myotubularin-related phosphatases. Increases lipid phosphatase MTMR6 catalytic activity, specifically towards phosphatidylinositol 3,5-bisphosphate, and MTMR6 binding affinity for phosphorylated phosphatidylinositols. Positively regulates lipid phosphatase MTMR7 catalytic activity. The formation of the MTMR6-MTMR9 complex, stabilizes both MTMR6 and MTMR9 protein levels. Plays a role in the late stages of macropinocytosis possibly by regulating MTMR6-mediated dephosphorylation of phosphatidylinositol 3-phosphate in membrane ruffles. Negatively regulates DNA damage-induced apoptosis, in part via its association with MTMR6. Does not bind mono-, di- and tri-phosphorylated phosphatidylinositols, phosphatidic acid and phosphatidylserine. This is Myotubularin-related protein 9 (Mtmr9) from Mus musculus (Mouse).